The sequence spans 473 residues: Serine/threonine-protein phosphatase T (473 aa).

TPR repeat units lie at residues Ala5 to Asn38, Ile40 to Tyr72, and Ala73 to Asp106. The tract at residues Lys159–Gly472 is catalytic. Mn(2+) contacts are provided by Asp217, His219, Asp246, and Asn278. His279 functions as the Proton donor/acceptor in the catalytic mechanism. Residues His327 and His404 each coordinate Mn(2+).

The protein belongs to the PPP phosphatase family. PP-5 (PP-T) subfamily. Requires Mg(2+) as cofactor. Mn(2+) is required as a cofactor.

The protein localises to the nucleus. It catalyses the reaction O-phospho-L-seryl-[protein] + H2O = L-seryl-[protein] + phosphate. The enzyme catalyses O-phospho-L-threonyl-[protein] + H2O = L-threonyl-[protein] + phosphate. Its function is as follows. Protein phosphatase that specifically binds to and dephosphorylates the molecular chaperone Hsp90. Dephosphorylation positively regulates the Hsp90 chaperone machinery. The chain is Serine/threonine-protein phosphatase T (ppt1) from Schizosaccharomyces pombe (strain 972 / ATCC 24843) (Fission yeast).